Consider the following 110-residue polypeptide: DNA-binding protein PAE3044 (110 aa).

The protein belongs to the PDCD5 family.

The polypeptide is DNA-binding protein PAE3044 (Pyrobaculum aerophilum (strain ATCC 51768 / DSM 7523 / JCM 9630 / CIP 104966 / NBRC 100827 / IM2)).